The primary structure comprises 100 residues: Large ribosomal subunit protein bL28 (100 aa).

The protein belongs to the bacterial ribosomal protein bL28 family.

The sequence is that of Large ribosomal subunit protein bL28 from Ehrlichia ruminantium (strain Welgevonden).